The following is a 487-amino-acid chain: Arginine ADP-riboxanase CopC (487 aa).

The segment covering 1–12 (MRVENHSPSLSK) has biased composition (polar residues). The tract at residues 1–27 (MRVENHSPSLSKLNPPEAGSGDPTAIG) is disordered. NAD(+)-binding residues include histidine 137, glutamine 138, serine 139, leucine 143, alanine 150, alanine 152, asparagine 154, and leucine 157. Histidine 137 lines the nicotinamide pocket. ADP-D-ribose is bound by residues serine 139 and leucine 143. ADP-D-ribose-binding residues include alanine 152, asparagine 154, leucine 157, glycine 166, asparagine 167, threonine 168, and phenylalanine 183. Asparagine 167 serves as a coordination point for NAD(+). Phenylalanine 183 contributes to the NAD(+) binding site. The nicotinamide site is built by phenylalanine 183, phenylalanine 184, histidine 202, and phenylalanine 207. Position 202 (histidine 202) interacts with NAD(+). ADP-D-ribose contacts are provided by phenylalanine 207 and aspartate 230. The NAD(+) site is built by aspartate 230 and glutamate 325. Residue glutamate 325 participates in nicotinamide binding. The active site involves glutamate 325. ANK repeat units follow at residues 368–398 (DAVT…EAGD) and 444–476 (SGET…LLSE).

The protein belongs to the OspC family. As to quaternary structure, interacts with host calmodulin (CALM1, CALM2 and/or CALM3); specifically interacts with the apo form of calmodulin and calmodulin-binding is required to mediate arginine ADP-riboxanation of host caspases.

The protein localises to the secreted. The protein resides in the host cytoplasm. It catalyses the reaction L-arginyl-[protein] + NAD(+) = ADP-riboxanated L-argininyl-[protein] + nicotinamide + NH4(+) + H(+). Interaction with host calmodulin (CALM1, CALM2 and/or CALM3) is required to mediate arginine ADP-riboxanation of host caspases. ADP-riboxanase effector that inhibits host cell programmed cell death. Acts by mediating arginine ADP-riboxanation of host caspases (CASP3, CASP7, CASP8 and CASP9), blocking their processing and activation. ADP-riboxanation of host apoptotic caspases (CASP3, CASP7, CASP8 and CASP9) prevents their activation, thereby inhibiting host cell apoptosis. ADP-riboxanation of host CASP8 also inhibits host cell necroptosis. ADP-riboxanation of host CASP3 also abolishes pyroptosis by preventing its ability to cleave GSDME. May also able to inactivate CASP4/CASP11, blocking inhibiting LPS-induced pyroptosis; however this activity is unsure in vivo. ADP-riboxanation takes place in several steps: CopC first binds host caspases and NAD(+); NAD(+) is hydrolyzed to nicotinamide and ADP-D-ribose. CopC then transfers the ADP-D-ribose to the modified arginine of caspases and forms the ADP-D-ribose-deacylization on arginine, leading to deamination to remove one N-omega group on target arginine. This is Arginine ADP-riboxanase CopC from Chromobacterium violaceum (strain ATCC 12472 / DSM 30191 / JCM 1249 / CCUG 213 / NBRC 12614 / NCIMB 9131 / NCTC 9757 / MK).